The following is a 400-amino-acid chain: 1-deoxy-D-xylulose 5-phosphate reductoisomerase (400 aa).

The NADPH site is built by Thr10, Gly11, Ser12, Ile13, Gly36, Asn38, and Asn124. Residue Lys125 participates in 1-deoxy-D-xylulose 5-phosphate binding. Glu126 serves as a coordination point for NADPH. Asp150 contacts Mn(2+). The 1-deoxy-D-xylulose 5-phosphate site is built by Ser151, Glu152, Ser186, and His209. Glu152 is a Mn(2+) binding site. Residue Gly215 participates in NADPH binding. Ser222, Asn227, Lys228, and Glu231 together coordinate 1-deoxy-D-xylulose 5-phosphate. Glu231 serves as a coordination point for Mn(2+).

The protein belongs to the DXR family. It depends on Mg(2+) as a cofactor. Mn(2+) is required as a cofactor.

The catalysed reaction is 2-C-methyl-D-erythritol 4-phosphate + NADP(+) = 1-deoxy-D-xylulose 5-phosphate + NADPH + H(+). The protein operates within isoprenoid biosynthesis; isopentenyl diphosphate biosynthesis via DXP pathway; isopentenyl diphosphate from 1-deoxy-D-xylulose 5-phosphate: step 1/6. Catalyzes the NADPH-dependent rearrangement and reduction of 1-deoxy-D-xylulose-5-phosphate (DXP) to 2-C-methyl-D-erythritol 4-phosphate (MEP). This is 1-deoxy-D-xylulose 5-phosphate reductoisomerase from Aliivibrio salmonicida (strain LFI1238) (Vibrio salmonicida (strain LFI1238)).